A 315-amino-acid chain; its full sequence is N-acetyl-gamma-glutamyl-phosphate reductase (315 aa).

C117 is a catalytic residue.

The protein belongs to the NAGSA dehydrogenase family. Type 2 subfamily.

It localises to the cytoplasm. The catalysed reaction is N-acetyl-L-glutamate 5-semialdehyde + phosphate + NADP(+) = N-acetyl-L-glutamyl 5-phosphate + NADPH + H(+). It participates in amino-acid biosynthesis; L-arginine biosynthesis; N(2)-acetyl-L-ornithine from L-glutamate: step 3/4. Functionally, catalyzes the NADPH-dependent reduction of N-acetyl-5-glutamyl phosphate to yield N-acetyl-L-glutamate 5-semialdehyde. This Burkholderia lata (strain ATCC 17760 / DSM 23089 / LMG 22485 / NCIMB 9086 / R18194 / 383) protein is N-acetyl-gamma-glutamyl-phosphate reductase.